The chain runs to 370 residues: Probable endopolygalacturonase A (370 aa).

An N-terminal signal peptide occupies residues 1–19 (MPSAKPLFCLATLAGAALA). The propeptide occupies 20–32 (APAPSRATDFNKR). A disulfide bridge connects residues cysteine 35 and cysteine 50. 6 PbH1 repeats span residues 162–192 (SDNL…DISE), 193–214 (STYI…AINS), 215–235 (GENI…SIGS), 244–265 (VKNV…RIKT), 273–295 (VEDI…VIEQ), and 307–352 (SNGV…DITG). Residue aspartate 207 is the Proton donor of the active site. Cysteine 209 and cysteine 225 are joined by a disulfide. Histidine 229 is an active-site residue. Asparagine 246 is a glycosylation site (N-linked (GlcNAc...) asparagine). Disulfide bonds link cysteine 335–cysteine 340 and cysteine 359–cysteine 368.

This sequence belongs to the glycosyl hydrolase 28 family.

The protein localises to the secreted. The catalysed reaction is (1,4-alpha-D-galacturonosyl)n+m + H2O = (1,4-alpha-D-galacturonosyl)n + (1,4-alpha-D-galacturonosyl)m.. Its function is as follows. Involved in maceration and soft-rotting of plant tissue. Hydrolyzes the 1,4-alpha glycosidic bonds of de-esterified pectate in the smooth region of the plant cell wall. This Aspergillus kawachii (strain NBRC 4308) (White koji mold) protein is Probable endopolygalacturonase A (pgaA).